The primary structure comprises 526 residues: MTETGDDLATVKKPIPFLVIFKDLRHVFSRDTTGREILGIAFPAALALAADPIASLIDTAFVGRLGAVQLAAVGVSIAIFNQASRITIFPLVSLTTSFVAEEDTMEKMKEEANKANLVHAETILVQDSLEKGISSPTSNDTNQPQQPPAPDTKSNSGNKSNKKEKRTIRTASTAMILGLILGLVQAIFLIFSSKLLLGVMGVKPNSPMLSPAHKYLSIRALGAPALLLSLAMQGIFRGFKDTKTPLFATVVADVINIVLDPIFIFVLRLGIIGAAIAHVISQYFMTLILFVFLAKKVNLIPPNFGDLQFGRFLKNGLLLLARTIAVTFCQTLAAAMAARLGTTPMAAFQICLQVWLTSSLLNDGLAVAGQAILACSFAEKDYNKVTAVASRVLQMGFVLGLGLSVFVGLGLYFGAGVFSKDPAVIHLMAIGIPFIAATQPINSLAFVLDGVNFGASDFAYTAYSMVGVAAISIAAVIYMAKTNGFIGIWIALTIYMALRAITGIARMATGTGPWRFLRGRSSSSSS.

Over 1-36 the chain is Cytoplasmic; it reads MTETGDDLATVKKPIPFLVIFKDLRHVFSRDTTGRE. The helical transmembrane segment at 37-57 threads the bilayer; it reads ILGIAFPAALALAADPIASLI. Residues 58–59 lie on the Extracellular side of the membrane; it reads DT. A helical membrane pass occupies residues 60-80; the sequence is AFVGRLGAVQLAAVGVSIAIF. At 81–170 the chain is on the cytoplasmic side; it reads NQASRITIFP…NKKEKRTIRT (90 aa). Residues 133-166 form a disordered region; the sequence is ISSPTSNDTNQPQQPPAPDTKSNSGNKSNKKEKR. Residues 134–144 are compositionally biased toward polar residues; the sequence is SSPTSNDTNQP. A helical membrane pass occupies residues 171–191; the sequence is ASTAMILGLILGLVQAIFLIF. At 192–215 the chain is on the extracellular side; the sequence is SSKLLLGVMGVKPNSPMLSPAHKY. A helical membrane pass occupies residues 216–236; the sequence is LSIRALGAPALLLSLAMQGIF. Residues 237 to 244 are Cytoplasmic-facing; that stretch reads RGFKDTKT. A helical membrane pass occupies residues 245–267; it reads PLFATVVADVINIVLDPIFIFVL. The Extracellular segment spans residues 268–270; the sequence is RLG. The chain crosses the membrane as a helical span at residues 271–293; sequence IIGAAIAHVISQYFMTLILFVFL. Residues 294 to 316 are Cytoplasmic-facing; it reads AKKVNLIPPNFGDLQFGRFLKNG. Residues 317 to 337 form a helical membrane-spanning segment; it reads LLLLARTIAVTFCQTLAAAMA. At 338–353 the chain is on the extracellular side; sequence ARLGTTPMAAFQICLQ. A helical membrane pass occupies residues 354 to 374; sequence VWLTSSLLNDGLAVAGQAILA. The Cytoplasmic portion of the chain corresponds to 375 to 396; sequence CSFAEKDYNKVTAVASRVLQMG. A helical membrane pass occupies residues 397 to 417; sequence FVLGLGLSVFVGLGLYFGAGV. At 418–426 the chain is on the extracellular side; the sequence is FSKDPAVIH. Residues 427–447 form a helical membrane-spanning segment; that stretch reads LMAIGIPFIAATQPINSLAFV. The Cytoplasmic segment spans residues 448–457; that stretch reads LDGVNFGASD. Residues 458-478 traverse the membrane as a helical segment; that stretch reads FAYTAYSMVGVAAISIAAVIY. Topologically, residues 479-484 are extracellular; the sequence is MAKTNG. Residues 485-505 traverse the membrane as a helical segment; it reads FIGIWIALTIYMALRAITGIA. The Cytoplasmic portion of the chain corresponds to 506–526; it reads RMATGTGPWRFLRGRSSSSSS.

This sequence belongs to the multi antimicrobial extrusion (MATE) (TC 2.A.66.1) family. Expressed in roots in the pericycle and cells internal to the pericycle and surrounding the vascular tissue. Also expressed in seed and flower.

Its subcellular location is the cell membrane. Citrate transporter responsible for loading citrate into xylem tissues, which helps facilitate iron transport to shoots. Mediates the citrate release in the apoplastic spaces during plant development allowing iron nutrition between symplastically disconnected tissues. The protein is Protein DETOXIFICATION 43 of Arabidopsis thaliana (Mouse-ear cress).